The sequence spans 241 residues: Polycomb group RING finger protein 3 (241 aa).

An RING-type zinc finger spans residues 17–56 (CRLCSGYLIDATTVTECLHTFCRSCLVKYLEENNTCPTCR). Residues 115–148 (AKQHLDPRNGETKADDNSNKETAEEKQEEDNDYH) form a disordered region. Residues 117–139 (QHLDPRNGETKADDNSNKETAEE) show a composition bias toward basic and acidic residues. Positions 131 to 241 (NSNKETAEEK…LHYRPKMDLL (111 aa)) are interaction with BCORL1.

As to quaternary structure, component of a PRC1-like complex that contains PCGF3, RNF2 and RYBP. Interacts with RNF2. Interacts with CBX6, CBX7 and CBX8. Interacts with BCORL1.

The protein resides in the nucleus. The protein localises to the nucleoplasm. Its function is as follows. Component of a Polycomb group (PcG) multiprotein PRC1-like complex, a complex class required to maintain the transcriptionally repressive state of many genes, including Hox genes, throughout development. PcG PRC1 complex acts via chromatin remodeling and modification of histones; it mediates monoubiquitination of histone H2A 'Lys-119', rendering chromatin heritably changed in its expressibility. Within the PRC1-like complex, regulates RNF2 ubiquitin ligase activity. Plays a redundant role with PCGF5 as part of a PRC1-like complex that mediates monoubiquitination of histone H2A 'Lys-119' on the X chromosome and is required for normal silencing of one copy of the X chromosome in XX females. The chain is Polycomb group RING finger protein 3 (PcgF3) from Mus musculus (Mouse).